Here is a 627-residue protein sequence, read N- to C-terminus: Translation factor GUF1, mitochondrial (627 aa).

Residues 1 to 16 (MSLAWSAGRAWSRQSY) constitute a mitochondrion transit peptide. Residues 40 to 221 (ERYRNFCIVA…AVIERIPHPV (182 aa)) enclose the tr-type G domain. GTP contacts are provided by residues 49–56 (AHIDHGKS), 114–118 (DTPGH), and 168–171 (NKID).

Belongs to the TRAFAC class translation factor GTPase superfamily. Classic translation factor GTPase family. LepA subfamily.

Its subcellular location is the mitochondrion inner membrane. The catalysed reaction is GTP + H2O = GDP + phosphate + H(+). Functionally, promotes mitochondrial protein synthesis. May act as a fidelity factor of the translation reaction, by catalyzing a one-codon backward translocation of tRNAs on improperly translocated ribosomes. Binds to mitochondrial ribosomes in a GTP-dependent manner. The polypeptide is Translation factor GUF1, mitochondrial (Fusarium vanettenii (strain ATCC MYA-4622 / CBS 123669 / FGSC 9596 / NRRL 45880 / 77-13-4) (Fusarium solani subsp. pisi)).